Reading from the N-terminus, the 102-residue chain is Small ribosomal subunit protein uS10 (102 aa).

It belongs to the universal ribosomal protein uS10 family. In terms of assembly, part of the 30S ribosomal subunit.

Involved in the binding of tRNA to the ribosomes. The protein is Small ribosomal subunit protein uS10 of Gluconobacter oxydans (strain 621H) (Gluconobacter suboxydans).